The following is a 244-amino-acid chain: 5-oxoprolinase subunit A (244 aa).

The protein belongs to the LamB/PxpA family. Forms a complex composed of PxpA, PxpB and PxpC.

The catalysed reaction is 5-oxo-L-proline + ATP + 2 H2O = L-glutamate + ADP + phosphate + H(+). Its function is as follows. Catalyzes the cleavage of 5-oxoproline to form L-glutamate coupled to the hydrolysis of ATP to ADP and inorganic phosphate. The protein is 5-oxoprolinase subunit A of Salmonella paratyphi C (strain RKS4594).